Reading from the N-terminus, the 261-residue chain is Sulfur carrier protein FdhD (261 aa).

The active-site Cysteine persulfide intermediate is C105. 245 to 250 lines the Mo-bis(molybdopterin guanine dinucleotide) pocket; sequence FIRGDR.

This sequence belongs to the FdhD family.

Its subcellular location is the cytoplasm. Functionally, required for formate dehydrogenase (FDH) activity. Acts as a sulfur carrier protein that transfers sulfur from IscS to the molybdenum cofactor prior to its insertion into FDH. In Listeria monocytogenes serovar 1/2a (strain ATCC BAA-679 / EGD-e), this protein is Sulfur carrier protein FdhD.